The following is a 475-amino-acid chain: Doublecortin domain-containing protein 2 (475 aa).

2 consecutive Doublecortin domains span residues 17-100 and 139-221; these read KSVL…LNYL and CTIF…LPYS. A disordered region spans residues 234–475; the sequence is YGQKASSLPP…EANKASSAVA (242 aa). The span at 252–272 shows a compositional bias: polar residues; that stretch reads GSGNYRQSKSTIGSSDNSSPQ. Phosphoserine is present on Ser-270. Residues 353 to 365 show a composition bias toward basic and acidic residues; that stretch reads EKTSKDANQKEDF. Over residues 407-425 the composition is skewed to acidic residues; the sequence is TDEENGEELDQVAEELQPT.

In terms of assembly, interacts with DVL1, DVL2 and DVL3. As to expression, expressed in hair cells of the inner ear.

It is found in the cell projection. Its subcellular location is the cilium. The protein resides in the cytoplasm. The protein localises to the cytoskeleton. It localises to the cilium axoneme. It is found in the kinocilium. In terms of biological role, protein that plays a role in the inhibition of canonical Wnt signaling pathway. May be involved in neuronal migration during development of the cerebral neocortex. Involved in the control of ciliogenesis and ciliary length. This chain is Doublecortin domain-containing protein 2 (Dcdc2), found in Mus musculus (Mouse).